We begin with the raw amino-acid sequence, 219 residues long: Ras-related protein Rab-3B (219 aa).

An N-acetylalanine modification is found at Ala2. Residues Ser31, Ser32, Val33, Gly34, Lys35, Thr36, Ser37, Pro49, and Ser53 each coordinate GTP. Thr36 is a binding site for Mg(2+). The short motif at 45–58 is the Switch 1 element; sequence DTFTPAFVSTVGID. The Mg(2+) site is built by Thr54 and Asp77. Residues 78–96 carry the Switch 2 motif; the sequence is TAGQERYRTITTAYYRGAM. Gly80 serves as a coordination point for GTP. Phosphothreonine is present on Thr86. Asn135, Lys136, Asp138, Ala166, and Lys167 together coordinate GTP. A phosphoserine mark is found at Ser188 and Ser190. 2 S-geranylgeranyl cysteine lipidation sites follow: Cys217 and Cys219. Cysteine methyl ester is present on Cys219.

It belongs to the small GTPase superfamily. Rab family. As to quaternary structure, interacts with RIMS1, RIMS2, RPH3A and RPH3AL. The GTP-bound form interacts with GAS8/DRC4 (via coiled-coil domains). Interacts with GDI2, CHM and CHML; phosphorylation at Thr-86 disrupts these interactions. Interacts with MADD (via uDENN domain); the GTP-bound form is preferred for interaction. It depends on Mg(2+) as a cofactor. In terms of processing, phosphorylation of Thr-86 in the switch II region by LRRK2 prevents the association of RAB regulatory proteins, including CHM, CHML and RAB GDP dissociation inhibitor GDI2.

The protein localises to the cell membrane. It localises to the golgi apparatus. It catalyses the reaction GTP + H2O = GDP + phosphate + H(+). Regulated by guanine nucleotide exchange factors (GEFs) which promote the exchange of bound GDP for free GTP. Regulated by GTPase activating proteins (GAPs) which increase the GTP hydrolysis activity. Inhibited by GDP dissociation inhibitors (GDIs) which prevent Rab-GDP dissociation. The small GTPases Rab are key regulators of intracellular membrane trafficking, from the formation of transport vesicles to their fusion with membranes. Rabs cycle between an inactive GDP-bound form and an active GTP-bound form that is able to recruit to membranes different sets of downstream effectors directly responsible for vesicle formation, movement, tethering and fusion. This Mesocricetus auratus (Golden hamster) protein is Ras-related protein Rab-3B (RAB3B).